Consider the following 87-residue polypeptide: Neurotoxin Cex4 (87 aa).

The N-terminal stretch at 1–19 is a signal peptide; it reads MNSLLMITACLFLIGTVWA. In terms of domain architecture, LCN-type CS-alpha/beta spans 20-85; sequence KEGYLVNKST…TYPLPNKSCG (66 aa). 4 cysteine pairs are disulfide-bonded: Cys31-Cys84, Cys35-Cys60, Cys44-Cys65, and Cys48-Cys67. Cys84 bears the Cysteine amide mark. Positions 85–87 are excised as a propeptide; it reads GRK.

It belongs to the long (4 C-C) scorpion toxin superfamily. Sodium channel inhibitor family. Beta subfamily. As to expression, expressed by the venom gland.

It localises to the secreted. Functionally, beta toxins bind voltage-independently at site-4 of sodium channels (Nav) and shift the voltage of activation toward more negative potentials thereby affecting sodium channel activation and promoting spontaneous and repetitive firing. This is Neurotoxin Cex4 from Centruroides exilicauda (Bark scorpion).